The primary structure comprises 699 residues: Cysteine--tRNA ligase (699 aa).

A unknown region spans residues 1 to 226 (MTTITEKRLT…SEQQRLIHNP (226 aa)). Residue Cys254 participates in Zn(2+) binding. Residues 256–266 (MTVYDYCHLGH) carry the 'HIGH' region motif. Zn(2+)-binding residues include Cys435, His460, and Glu464. The 'KMSKS' region signature appears at 508–512 (KMSKS). Position 511 (Lys511) interacts with ATP.

It belongs to the class-I aminoacyl-tRNA synthetase family. Monomer. Zn(2+) serves as cofactor.

The protein localises to the cytoplasm. It catalyses the reaction tRNA(Cys) + L-cysteine + ATP = L-cysteinyl-tRNA(Cys) + AMP + diphosphate. This Neisseria meningitidis serogroup A / serotype 4A (strain DSM 15465 / Z2491) protein is Cysteine--tRNA ligase (cysS).